Consider the following 1331-residue polypeptide: Contactin-associated protein-like 2 (1331 aa).

An N-terminal signal peptide occupies residues 1 to 27 (MLAAPRAGCGAALLLWIVSSCLCRAWT). Topologically, residues 28–1262 (APSTSQKCDE…IRNGVNRNSA (1235 aa)) are extracellular. The region spanning 35-181 (CDEPLVSGLP…IGLRIEVYGC (147 aa)) is the F5/8 type C domain. Cysteines 35 and 181 form a disulfide. 2 consecutive Laminin G-like domains span residues 187 to 368 (VINF…SFSC) and 373 to 552 (TVPV…IDMC). 8 N-linked (GlcNAc...) asparagine glycosylation sites follow: N289, N346, N363, N379, N436, N506, N507, and N546. A disulfide bridge links C336 with C368. 4 disulfide bridges follow: C520–C552, C558–C569, C563–C578, and C580–C590. In terms of domain architecture, EGF-like 1 spans 554 to 591 (IIDRCVPNHCERGGKCSQTWDSFKCTCDETGYTGATCH). Residues 592–798 (NSIYEPSCEA…LRCQGDRNYW (207 aa)) enclose the Fibrinogen C-terminal domain. Residues N630 and N735 are each glycosylated (N-linked (GlcNAc...) asparagine). Residues 799–963 (NAASFPNPSS…KVTSGFISGC (165 aa)) form the Laminin G-like 3 domain. Intrachain disulfides connect C936–C963, C967–C980, C974–C989, and C991–C1001. Residues 964 to 1002 (SGHCTSYGTNCENGGKCLERYHGYSCDCSNTAYDGTFCN) form the EGF-like 2 domain. Residues 1023–1214 (ATNARDSSSR…IQGELVESNC (192 aa)) form the Laminin G-like 4 domain. N1116 and N1198 each carry an N-linked (GlcNAc...) asparagine glycan. C1178 and C1214 are oxidised to a cystine. Residues 1263–1283 (IIGGVIAVVIFTILCTLVFLI) form a helical membrane-spanning segment. Residues 1284–1331 (RYMFRHKGTYHTNEAKGAESAESADAAIMNNDPNFTETIDESKKEWLI) lie on the Cytoplasmic side of the membrane. S1303 and S1306 each carry phosphoserine.

The protein belongs to the neurexin family. Interacts (via C-terminus) with KCNA2.

It is found in the membrane. The protein resides in the cell projection. It localises to the axon. Its subcellular location is the cell junction. The protein localises to the paranodal septate junction. Required for gap junction formation. Required, with CNTNAP1, for radial and longitudinal organization of myelinated axons. Plays a role in the formation of functional distinct domains critical for saltatory conduction of nerve impulses in myelinated nerve fibers. Demarcates the juxtaparanodal region of the axo-glial junction. In Pongo abelii (Sumatran orangutan), this protein is Contactin-associated protein-like 2 (CNTNAP2).